The sequence spans 365 residues: 3-dehydroquinate synthase (365 aa).

Residues 72-77 (SGEKEK), 130-131 (TT), K142, and K151 each bind NAD(+). Residues E184, H247, and H264 each contribute to the Zn(2+) site.

This sequence belongs to the sugar phosphate cyclases superfamily. Dehydroquinate synthase family. The cofactor is Co(2+). Requires Zn(2+) as cofactor. NAD(+) serves as cofactor.

The protein resides in the cytoplasm. It carries out the reaction 7-phospho-2-dehydro-3-deoxy-D-arabino-heptonate = 3-dehydroquinate + phosphate. The protein operates within metabolic intermediate biosynthesis; chorismate biosynthesis; chorismate from D-erythrose 4-phosphate and phosphoenolpyruvate: step 2/7. Catalyzes the conversion of 3-deoxy-D-arabino-heptulosonate 7-phosphate (DAHP) to dehydroquinate (DHQ). This Bacillus cereus (strain AH187) protein is 3-dehydroquinate synthase.